The primary structure comprises 62 residues: [Ser6, Val10, Asp11]-phyllokinin (62 aa).

Positions 1 to 22 are cleaved as a signal peptide; sequence MSFLKKSLLLVLFLGLVSFSIC. Residues 23–51 constitute a propeptide that is removed on maturation; that stretch reads EEEKRETEEEENEDDMDEESEEKKRESPD. The interval 24–62 is disordered; sequence EEKRETEEEENEDDMDEESEEKKRESPDRPPGFSPFRVD. Residues 30-42 show a composition bias toward acidic residues; sequence EEEENEDDMDEES.

Belongs to the frog skin active peptide (FSAP) family. Bradykinin-related peptide subfamily. In terms of tissue distribution, expressed by the skin glands.

It is found in the secreted. Functionally, induces relaxation of rat smooth muscle from tail artery and contraction of that from ileum, urinary bladder and uterus. Binds to both bradykinin receptor B1 (BDKRB1) and B2 (BDKRB2). The sequence is that of [Ser6, Val10, Asp11]-phyllokinin from Agalychnis spurrelli (Gliding leaf frog).